Consider the following 369-residue polypeptide: GTPase Obg (369 aa).

Residues 1–159 (MKFIDEARIE…RMLKLELKVL (159 aa)) form the Obg domain. Residues 128–147 (LHFKSSTNRAPRQKTDGKPG) form a disordered region. The OBG-type G domain occupies 160–334 (ADVGLLGMPN…LCYAIYDYLA (175 aa)). Residues 166 to 173 (GMPNAGKS), 191 to 195 (FTTLA), 213 to 216 (DIPG), 284 to 287 (NKLD), and 315 to 317 (SAL) each bind GTP. Residues Ser-173 and Thr-193 each contribute to the Mg(2+) site.

This sequence belongs to the TRAFAC class OBG-HflX-like GTPase superfamily. OBG GTPase family. As to quaternary structure, monomer. Mg(2+) is required as a cofactor.

The protein resides in the cytoplasm. An essential GTPase which binds GTP, GDP and possibly (p)ppGpp with moderate affinity, with high nucleotide exchange rates and a fairly low GTP hydrolysis rate. Plays a role in control of the cell cycle, stress response, ribosome biogenesis and in those bacteria that undergo differentiation, in morphogenesis control. This chain is GTPase Obg, found in Burkholderia multivorans (strain ATCC 17616 / 249).